The following is a 349-amino-acid chain: tRNA pseudouridine synthase D (349 aa).

Phenylalanine 26 is a binding site for substrate. Aspartate 79 (nucleophile) is an active-site residue. Asparagine 128 lines the substrate pocket. In terms of domain architecture, TRUD spans 154 to 302; it reads GVPNYFGSQR…VEGSRRAVLL (149 aa). Phenylalanine 328 is a substrate binding site.

Belongs to the pseudouridine synthase TruD family.

It carries out the reaction uridine(13) in tRNA = pseudouridine(13) in tRNA. Functionally, responsible for synthesis of pseudouridine from uracil-13 in transfer RNAs. The polypeptide is tRNA pseudouridine synthase D (Yersinia pseudotuberculosis serotype IB (strain PB1/+)).